A 282-amino-acid polypeptide reads, in one-letter code: 2,3,4,5-tetrahydropyridine-2,6-dicarboxylate N-succinyltransferase (282 aa).

Substrate is bound by residues arginine 109 and aspartate 146.

Belongs to the transferase hexapeptide repeat family. In terms of assembly, homotrimer.

The protein localises to the cytoplasm. It catalyses the reaction (S)-2,3,4,5-tetrahydrodipicolinate + succinyl-CoA + H2O = (S)-2-succinylamino-6-oxoheptanedioate + CoA. It functions in the pathway amino-acid biosynthesis; L-lysine biosynthesis via DAP pathway; LL-2,6-diaminopimelate from (S)-tetrahydrodipicolinate (succinylase route): step 1/3. This Bartonella quintana (strain Toulouse) (Rochalimaea quintana) protein is 2,3,4,5-tetrahydropyridine-2,6-dicarboxylate N-succinyltransferase.